A 342-amino-acid chain; its full sequence is 4-hydroxy-2-oxovalerate aldolase (342 aa).

Residues Ile5–Gln257 form the Pyruvate carboxyltransferase domain. Substrate is bound at residue Arg13 to Asp14. Asp14 contacts Mn(2+). His17 (proton acceptor) is an active-site residue. 2 residues coordinate substrate: Ser167 and His196. His196 and His198 together coordinate Mn(2+). Substrate is bound at residue Tyr287.

This sequence belongs to the 4-hydroxy-2-oxovalerate aldolase family.

It catalyses the reaction (S)-4-hydroxy-2-oxopentanoate = acetaldehyde + pyruvate. This is 4-hydroxy-2-oxovalerate aldolase from Acidovorax sp. (strain JS42).